Consider the following 625-residue polypeptide: MASPDKKSSLAALTLAAVGIVYGDIGTSPLYTMKEVFSKEHGLALTPENLLGVVSLIVWGLIIIVSLKYVTLVLRANNRGEGGIMALMALALSSVTRNSRWYFPLLVMGLFGATLFYGDSVITPAISVLSAIEGLSVATETFDPYVVPLTVAVLVGLYSVQARGTAGIGKWFGPIMVVWFATLAVMGVVNIIDAPEILYALNPWHALHFLDGNRFLAFIALGAVVLAFTGAEALYADMGHFGAKPIRMAWFLVAFPALALNYLGQGALLLMHPDAVTNPFYQQLGAWSIYPLVALSTMAAIIASQATISGTFSMTKQAIALGFLPRMKIEFTSASQIGQIYIPAVNWLQMAVVVMAVVGFGSSSDLAAAYGIAVTATMLVTTILTFFVIRYRWKYNLLLCLASTGFFLVIDLSLFSANMLKLFHGGWFPLLLGTILFTLMLTWKRGRELVFENLQKHAIPLEDFLASLFISPPTRVPGTAIFLRGESDGVPHAMLHNLSHNKVLHERVVFLTVRMMEVPYVPTTDQVRIHLLGDDCYQMDVTYGFKNVPDIPAALELAKDQGLEFEMMETSFFIARQTVVANPVRGMALWREHIFVAMSRHARGAADYYQIPSNRVIELGTKVEI.

Helical transmembrane passes span 10 to 30, 50 to 70, 102 to 122, 142 to 162, 172 to 192, 215 to 235, 250 to 270, 284 to 304, 340 to 360, 369 to 389, 397 to 417, and 422 to 442; these read LAAL…TSPL, LLGV…LKYV, YFPL…DSVI, FDPY…SVQA, FGPI…VNII, FLAF…EALY, WFLV…ALLL, LGAW…IIAS, IYIP…VVGF, AYGI…FFVI, LLLC…LFSA, and LFHG…LMLT.

Belongs to the HAK/KUP transporter (TC 2.A.72) family.

It is found in the cell inner membrane. The enzyme catalyses K(+)(in) + H(+)(in) = K(+)(out) + H(+)(out). Functionally, transport of potassium into the cell. Likely operates as a K(+):H(+) symporter. The chain is Probable potassium transport system protein Kup from Janthinobacterium sp. (strain Marseille) (Minibacterium massiliensis).